The primary structure comprises 185 residues: Ribosome-recycling factor (185 aa).

Belongs to the RRF family.

The protein localises to the cytoplasm. Responsible for the release of ribosomes from messenger RNA at the termination of protein biosynthesis. May increase the efficiency of translation by recycling ribosomes from one round of translation to another. The chain is Ribosome-recycling factor from Corynebacterium glutamicum (strain ATCC 13032 / DSM 20300 / JCM 1318 / BCRC 11384 / CCUG 27702 / LMG 3730 / NBRC 12168 / NCIMB 10025 / NRRL B-2784 / 534).